Consider the following 620-residue polypeptide: Eukaryotic translation initiation factor 2-alpha kinase 1 (620 aa).

The segment at 1 to 38 (MLGGGSVDGERDTDDDAAGAVAAPPAIDFPAEVSDPKY) is disordered. Residues 18 to 28 (AGAVAAPPAID) show a composition bias toward low complexity. The SIFI-degron motif lies at 85-104 (LHSKQVFKLLCQTFIKMGLL). Residues 167–581 (FEELAILGKG…ALQLLQSELF (415 aa)) form the Protein kinase domain. ATP-binding positions include 173-181 (LGKGGYGRV) and lysine 196. Threonine 283 is subject to Phosphothreonine. The HRM 1 repeat unit spans residues 408 to 413 (ACPYVM). Aspartate 440 serves as the catalytic Proton acceptor. Phosphothreonine; by autocatalysis occurs at positions 484 and 486. Phosphothreonine is present on threonine 491. The stretch at 550 to 555 (RCPVQA) is one HRM 2 repeat.

It belongs to the protein kinase superfamily. Ser/Thr protein kinase family. GCN2 subfamily. In terms of assembly, synthesized in an inactive form that binds to the N-terminal domain of CDC37. Has to be associated with a multiprotein complex containing Hsp90, CDC37 and PPP5C for maturation and activation by autophosphorylation. The phosphatase PPP5C modulates this activation. Homodimer; homodimerizes in presence of heme, forming a disulfide-linked inactive homodimer. Interacts with DELE1; binds both to full-length DELE1 and processed form of DELE1 (S-DELE1) in response to stress, leading to activate its protein kinase activity and trigger the integrated stress response (ISR). Post-translationally, activated by autophosphorylation; phosphorylated predominantly on serine and threonine residues, but also on tyrosine residues. Autophosphorylation at Thr-486 is required for kinase activation. The active autophosphorylated form apparently is largely refractory to cellular heme fluctuations. In terms of processing, ubiquitinated and degraded by the SIFI complex once the mitochondrial stress has been resolved, thereby providing stress response silencing. Within the SIFI complex, UBR4 initiates ubiquitin chain that are further elongated or branched by KCMF1.

It is found in the cytoplasm. The enzyme catalyses L-seryl-[protein] + ATP = O-phospho-L-seryl-[protein] + ADP + H(+). It catalyses the reaction L-threonyl-[protein] + ATP = O-phospho-L-threonyl-[protein] + ADP + H(+). With respect to regulation, in normal conditions, the protein kinase activity is inhibited; inhibition is relieved by various stress conditions. Inhibited by heme: in presence of heme, forms a disulfide-linked inactive homodimer. Heme depletion relieves inhibition and stimulates kinase activity by autophosphorylation. Inhibited by the heme metabolites biliverdin and bilirubin. Induced by oxidative stress generated by arsenite treatment. Binding of nitric oxide (NO) to the heme iron in the N-terminal heme-binding domain activates the kinase activity, while binding of carbon monoxide (CO) suppresses kinase activity. Protein kinase activity is also activated upon binding to DELE1 in response to various stress, triggering the integrated stress response (ISR): activated by full-length DELE1 in response to iron deficiency, while it is activated by the processed form of DELE1 (S-DELE1) in response to mitochondrial stress. In terms of biological role, metabolic-stress sensing protein kinase that phosphorylates the alpha subunit of eukaryotic translation initiation factor 2 (EIF2S1/eIF-2-alpha) in response to various stress conditions. Key activator of the integrated stress response (ISR) required for adaptation to various stress, such as heme deficiency, oxidative stress, osmotic shock, mitochondrial dysfunction and heat shock. EIF2S1/eIF-2-alpha phosphorylation in response to stress converts EIF2S1/eIF-2-alpha in a global protein synthesis inhibitor, leading to a global attenuation of cap-dependent translation, while concomitantly initiating the preferential translation of ISR-specific mRNAs, such as the transcriptional activator ATF4, and hence allowing ATF4-mediated reprogramming. Acts as a key sensor of heme-deficiency: in normal conditions, binds hemin via a cysteine thiolate and histidine nitrogenous coordination, leading to inhibit the protein kinase activity. This binding occurs with moderate affinity, allowing it to sense the heme concentration within the cell: heme depletion relieves inhibition and stimulates kinase activity, activating the ISR. Thanks to this unique heme-sensing capacity, plays a crucial role to shut off protein synthesis during acute heme-deficient conditions. In red blood cells (RBCs), controls hemoglobin synthesis ensuring a coordinated regulation of the synthesis of its heme and globin moieties. It thereby plays an essential protective role for RBC survival in anemias of iron deficiency. Iron deficiency also triggers activation by full-length DELE1. Also activates the ISR in response to mitochondrial dysfunction: HRI/EIF2AK1 protein kinase activity is activated upon binding to the processed form of DELE1 (S-DELE1), thereby promoting the ATF4-mediated reprogramming. Also acts as an activator of mitophagy in response to mitochondrial damage: catalyzes phosphorylation of eIF-2-alpha (EIF2S1) following activation by S-DELE1, thereby promoting mitochondrial localization of EIF2S1, triggering PRKN-independent mitophagy. The polypeptide is Eukaryotic translation initiation factor 2-alpha kinase 1 (Rattus norvegicus (Rat)).